A 237-amino-acid chain; its full sequence is 3-oxoacyl-[acyl-carrier-protein] reductase (237 aa).

Met1 is subject to N-acetylmethionine. Residues 11-14 (SRGI), 34-35 (RN), Asp56, and 83-85 (AAG) contribute to the NADP(+) site. Ser135 contacts substrate. Residues Tyr148, Lys152, and 181 to 183 (IHT) contribute to the NADP(+) site. Tyr148 (proton acceptor) is an active-site residue. N6-acetyllysine is present on Lys195.

It belongs to the short-chain dehydrogenases/reductases (SDR) family. As to quaternary structure, homotetramer (in vitro). Heterotetramer with HSD17B8; contains two molecules each of HSD17B8 and CBR4. Does not form homotetramers when HSD17B8 is coexpressed, only heterotetramers (in vitro).

It is found in the mitochondrion matrix. The catalysed reaction is a (3R)-hydroxyacyl-[ACP] + NADP(+) = a 3-oxoacyl-[ACP] + NADPH + H(+). The enzyme catalyses a quinone + NADPH + H(+) = a quinol + NADP(+). It functions in the pathway lipid metabolism; fatty acid biosynthesis. Component of the heterotetramer complex KAR (3-ketoacyl-[acyl carrier protein] reductase or 3-ketoacyl-[ACP] reductase) that forms part of the mitochondrial fatty acid synthase (mtFAS). Beta-subunit of the KAR heterotetramer complex, responsible for the 3-ketoacyl-ACP reductase activity of the mtFAS, reduces 3-oxoacyl-[ACP] to (3R)-hydroxyacyl-[ACP] in a NADPH-dependent manner with no chain length preference, thereby participating in mitochondrial fatty acid biosynthesis. The homotetramer has NADPH-dependent quinone reductase activity (in vitro), hence could play a role in protection against cytotoxicity of exogenous quinones. As a heterotetramer, it can also reduce 9,10-phenanthrenequinone, 1,4-benzoquinone and various other o-quinones and p-quinones (in vitro). The protein is 3-oxoacyl-[acyl-carrier-protein] reductase (CBR4) of Bos taurus (Bovine).